Here is an 89-residue protein sequence, read N- to C-terminus: Sec-independent protein translocase protein TatA (89 aa).

The helical transmembrane segment at 1–21 (MGGISIWQLLIIALIVVLLFG) threads the bilayer. Basic and acidic residues predominate over residues 47-61 (EEKKALEENATDKPA). The tract at residues 47–89 (EEKKALEENATDKPAADTAKVTETAKVAETAEKKAESKGKEQA) is disordered. Residues 62 to 74 (ADTAKVTETAKVA) are compositionally biased toward low complexity. Basic and acidic residues predominate over residues 75-89 (ETAEKKAESKGKEQA).

This sequence belongs to the TatA/E family. As to quaternary structure, the Tat system comprises two distinct complexes: a TatABC complex, containing multiple copies of TatA, TatB and TatC subunits, and a separate TatA complex, containing only TatA subunits. Substrates initially bind to the TatABC complex, which probably triggers association of the separate TatA complex to form the active translocon.

It is found in the cell inner membrane. Part of the twin-arginine translocation (Tat) system that transports large folded proteins containing a characteristic twin-arginine motif in their signal peptide across membranes. TatA could form the protein-conducting channel of the Tat system. The protein is Sec-independent protein translocase protein TatA of Shewanella pealeana (strain ATCC 700345 / ANG-SQ1).